The sequence spans 191 residues: Cytochrome c biogenesis ATP-binding export protein CcmA (191 aa).

Residues 2 to 190 (LSLHQLQFKN…SIKSAQILRI (189 aa)) form the ABC transporter domain. 29–36 (GANGCGKS) serves as a coordination point for ATP.

This sequence belongs to the ABC transporter superfamily. CcmA exporter (TC 3.A.1.107) family. As to quaternary structure, the complex is composed of two ATP-binding proteins (CcmA) and two transmembrane proteins (CcmB).

It localises to the cell inner membrane. The enzyme catalyses heme b(in) + ATP + H2O = heme b(out) + ADP + phosphate + H(+). In terms of biological role, part of the ABC transporter complex CcmAB involved in the biogenesis of c-type cytochromes; once thought to export heme, this seems not to be the case, but its exact role is uncertain. Responsible for energy coupling to the transport system. This Rickettsia conorii (strain ATCC VR-613 / Malish 7) protein is Cytochrome c biogenesis ATP-binding export protein CcmA.